A 441-amino-acid polypeptide reads, in one-letter code: Putative collagenous domain-containing protein R238 (441 aa).

A Collagen-like domain is found at 164-199 (GCKGEKGIKGELGPKGNTGQKGDIGSKGDRGDKGEP). The disordered stretch occupies residues 171 to 198 (IKGELGPKGNTGQKGDIGSKGDRGDKGE). Over residues 187–198 (IGSKGDRGDKGE) the composition is skewed to basic and acidic residues.

In Acanthamoeba polyphaga (Amoeba), this protein is Putative collagenous domain-containing protein R238.